The following is a 1571-amino-acid chain: Pentafunctional AROM polypeptide (1571 aa).

The tract at residues 1–384 is 3-dehydroquinate synthase; the sequence is MEQPTTIQIL…HEQKASVVSN (384 aa). Residues 44-46, 81-84, 114-116, and aspartate 119 contribute to the NAD(+) site; these read DTN, ESSK, and GGV. A 7-phospho-2-dehydro-3-deoxy-D-arabino-heptonate-binding site is contributed by arginine 130. 139 to 140 contacts NAD(+); it reads TT. The 7-phospho-2-dehydro-3-deoxy-D-arabino-heptonate site is built by aspartate 146 and lysine 152. Residue lysine 161 participates in NAD(+) binding. Asparagine 162 is a 7-phospho-2-dehydro-3-deoxy-D-arabino-heptonate binding site. NAD(+)-binding positions include 179 to 182 and asparagine 190; that span reads FLNT. Glutamate 194 contacts Zn(2+). 7-phospho-2-dehydro-3-deoxy-D-arabino-heptonate is bound by residues 194 to 197 and lysine 250; that span reads EVIK. Glutamate 260 serves as the catalytic Proton acceptor; for 3-dehydroquinate synthase activity. 7-phospho-2-dehydro-3-deoxy-D-arabino-heptonate-binding positions include 264-268 and histidine 271; that span reads RNLLN. Histidine 271 lines the Zn(2+) pocket. The Proton acceptor; for 3-dehydroquinate synthase activity role is filled by histidine 275. 7-phospho-2-dehydro-3-deoxy-D-arabino-heptonate contacts are provided by histidine 287 and lysine 356. Histidine 287 provides a ligand contact to Zn(2+). The interval 397–843 is EPSP synthase; the sequence is VLPGIPKPLN…WDALAQTFKV (447 aa). The active-site For EPSP synthase activity is cysteine 825. Residues 866–1057 form a shikimate kinase region; sequence ASIFIIGMRG…KKKDHSFFVS (192 aa). 872–879 serves as a coordination point for ATP; that stretch reads GMRGAGKT. The 3-dehydroquinase stretch occupies residues 1058-1278; sequence LTLPDLQLSA…AAPGQVSAKD (221 aa). Histidine 1181 functions as the Proton acceptor; for 3-dehydroquinate dehydratase activity in the catalytic mechanism. Lysine 1209 serves as the catalytic Schiff-base intermediate with substrate; for 3-dehydroquinate dehydratase activity. Positions 1291–1571 are shikimate dehydrogenase; that stretch reads AKKFALFGKP…EDARAAVMNI (281 aa).

This sequence in the N-terminal section; belongs to the sugar phosphate cyclases superfamily. Dehydroquinate synthase family. It in the 2nd section; belongs to the EPSP synthase family. In the 3rd section; belongs to the shikimate kinase family. The protein in the 4th section; belongs to the type-I 3-dehydroquinase family. This sequence in the C-terminal section; belongs to the shikimate dehydrogenase family. As to quaternary structure, homodimer. Zn(2+) is required as a cofactor.

The protein resides in the cytoplasm. The catalysed reaction is 7-phospho-2-dehydro-3-deoxy-D-arabino-heptonate = 3-dehydroquinate + phosphate. It catalyses the reaction 3-dehydroquinate = 3-dehydroshikimate + H2O. The enzyme catalyses shikimate + NADP(+) = 3-dehydroshikimate + NADPH + H(+). It carries out the reaction shikimate + ATP = 3-phosphoshikimate + ADP + H(+). The catalysed reaction is 3-phosphoshikimate + phosphoenolpyruvate = 5-O-(1-carboxyvinyl)-3-phosphoshikimate + phosphate. It functions in the pathway metabolic intermediate biosynthesis; chorismate biosynthesis; chorismate from D-erythrose 4-phosphate and phosphoenolpyruvate: step 2/7. The protein operates within metabolic intermediate biosynthesis; chorismate biosynthesis; chorismate from D-erythrose 4-phosphate and phosphoenolpyruvate: step 3/7. Its pathway is metabolic intermediate biosynthesis; chorismate biosynthesis; chorismate from D-erythrose 4-phosphate and phosphoenolpyruvate: step 4/7. It participates in metabolic intermediate biosynthesis; chorismate biosynthesis; chorismate from D-erythrose 4-phosphate and phosphoenolpyruvate: step 5/7. It functions in the pathway metabolic intermediate biosynthesis; chorismate biosynthesis; chorismate from D-erythrose 4-phosphate and phosphoenolpyruvate: step 6/7. In terms of biological role, the AROM polypeptide catalyzes 5 consecutive enzymatic reactions in prechorismate polyaromatic amino acid biosynthesis. This is Pentafunctional AROM polypeptide from Arthroderma otae (strain ATCC MYA-4605 / CBS 113480) (Microsporum canis).